We begin with the raw amino-acid sequence, 335 residues long: Probable pectinesterase 29 (335 aa).

The signal sequence occupies residues 1 to 24 (MGTHRIFIGLIALCCFCLPHLIEA). N-linked (GlcNAc...) asparagine glycosylation occurs at N43. The Proton donor role is filled by D166. Catalysis depends on D187, which acts as the Nucleophile. Substrate contacts are provided by R248 and W250. A glycan (N-linked (GlcNAc...) asparagine) is linked at N262.

The protein belongs to the pectinesterase family. As to expression, expressed in flower buds.

The protein localises to the secreted. It localises to the cell wall. It carries out the reaction [(1-&gt;4)-alpha-D-galacturonosyl methyl ester](n) + n H2O = [(1-&gt;4)-alpha-D-galacturonosyl](n) + n methanol + n H(+). Its pathway is glycan metabolism; pectin degradation; 2-dehydro-3-deoxy-D-gluconate from pectin: step 1/5. In terms of biological role, acts in the modification of cell walls via demethylesterification of cell wall pectin. The sequence is that of Probable pectinesterase 29 (PME29) from Arabidopsis thaliana (Mouse-ear cress).